The following is a 380-amino-acid chain: D-alanine--D-alanine ligase (380 aa).

The region spanning lysine 142–glutamate 348 is the ATP-grasp domain. Glutamine 172–valine 227 provides a ligand contact to ATP. Aspartate 302, glutamate 315, and asparagine 317 together coordinate Mg(2+).

It belongs to the D-alanine--D-alanine ligase family. The cofactor is Mg(2+). Mn(2+) is required as a cofactor.

The protein localises to the cytoplasm. It catalyses the reaction 2 D-alanine + ATP = D-alanyl-D-alanine + ADP + phosphate + H(+). The protein operates within cell wall biogenesis; peptidoglycan biosynthesis. In terms of biological role, cell wall formation. The protein is D-alanine--D-alanine ligase of Levilactobacillus brevis (strain ATCC 367 / BCRC 12310 / CIP 105137 / JCM 1170 / LMG 11437 / NCIMB 947 / NCTC 947) (Lactobacillus brevis).